A 208-amino-acid polypeptide reads, in one-letter code: Uracil phosphoribosyltransferase (208 aa).

5-phospho-alpha-D-ribose 1-diphosphate contacts are provided by residues Arg-78, Arg-103, and 130–138 (DPMFATGGT). Uracil contacts are provided by residues Ile-193 and 198-200 (GDA). Asp-199 contacts 5-phospho-alpha-D-ribose 1-diphosphate.

It belongs to the UPRTase family. The cofactor is Mg(2+).

The enzyme catalyses UMP + diphosphate = 5-phospho-alpha-D-ribose 1-diphosphate + uracil. Its pathway is pyrimidine metabolism; UMP biosynthesis via salvage pathway; UMP from uracil: step 1/1. Allosterically activated by GTP. Functionally, catalyzes the conversion of uracil and 5-phospho-alpha-D-ribose 1-diphosphate (PRPP) to UMP and diphosphate. This Campylobacter jejuni subsp. jejuni serotype O:6 (strain 81116 / NCTC 11828) protein is Uracil phosphoribosyltransferase.